Here is a 308-residue protein sequence, read N- to C-terminus: Apolipoprotein E (308 aa).

Positions 1 to 18 are cleaved as a signal peptide; that stretch reads MKFLWAALVVTLLAGCRA. Repeat copies occupy residues 75–96, 97–118, 119–140, 141–162, 163–184, 185–206, 207–224, and 225–246. Residues 75–246 form an 8 X 22 AA approximate tandem repeats region; that stretch reads LLIEETMKEV…RLDDMRDQME (172 aa). The LDL and other lipoprotein receptors binding stretch occupies residues 153–163; sequence HLRKLRKRLLR. A heparin-binding site is contributed by 157-160; the sequence is LRKR. Positions 205-281 are lipid-binding and lipoprotein association; that stretch reads AIPPSQQLRE…SWFEPLVQDM (77 aa). 220-227 is a binding site for heparin; that stretch reads GQKVRGRL. Residues 257–308 are homooligomerization; that stretch reads SQVRLQAEAFQTRLKSWFEPLVQDMQRQWASLVEKVQSTLGISPSTKPSKTK. The segment at 269–281 is specificity for association with VLDL; sequence RLKSWFEPLVQDM.

This sequence belongs to the apolipoprotein A1/A4/E family. Homotetramer. May interact with ABCA1; functionally associated with ABCA1 in the biogenesis of HDLs. May interact with APP/A4 amyloid-beta peptide; the interaction is extremely stable in vitro but its physiological significance is unclear. May interact with MAPT. May interact with MAP2. In the cerebrospinal fluid, interacts with secreted SORL1. Interacts with PMEL; this allows the loading of PMEL luminal fragment on ILVs to induce fibril nucleation. Post-translationally, APOE exists as multiple glycosylated and sialylated glycoforms within cells and in plasma. The extent of glycosylation and sialylation are tissue and context specific. In terms of processing, glycated in plasma VLDL. Phosphorylated by FAM20C in the extracellular medium.

Its subcellular location is the secreted. It localises to the extracellular space. The protein resides in the extracellular matrix. It is found in the extracellular vesicle. The protein localises to the endosome. Its subcellular location is the multivesicular body. Functionally, APOE is an apolipoprotein, a protein associating with lipid particles, that mainly functions in lipoprotein-mediated lipid transport between organs via the plasma and interstitial fluids. APOE is a core component of plasma lipoproteins and is involved in their production, conversion and clearance. Apolipoproteins are amphipathic molecules that interact both with lipids of the lipoprotein particle core and the aqueous environment of the plasma. As such, APOE associates with chylomicrons, chylomicron remnants, very low density lipoproteins (VLDL) and intermediate density lipoproteins (IDL) but shows a preferential binding to high-density lipoproteins (HDL). It also binds a wide range of cellular receptors including the LDL receptor/LDLR and the very low-density lipoprotein receptor/VLDLR that mediate the cellular uptake of the APOE-containing lipoprotein particles. Finally, APOE also has a heparin-binding activity and binds heparan-sulfate proteoglycans on the surface of cells, a property that supports the capture and the receptor-mediated uptake of APOE-containing lipoproteins by cells. This is Apolipoprotein E (APOE) from Pteropus vampyrus (Large flying fox).